A 747-amino-acid polypeptide reads, in one-letter code: Tripartite terminase subunit 3 (747 aa).

Residues 194–198 (KRAKV) carry the Nuclear localization signal motif. Residues 267–274 (VPRRHGKT) carry the Walker A motif motif. A Walker B motif motif is present at residues 361-366 (LLFVDE). The For ATPase activity role is filled by glutamate 366. Catalysis depends on for nuclease activity residues aspartate 521, glutamate 593, and aspartate 722.

This sequence belongs to the herpesviridae TRM3 protein family. Interacts with the terminase subunits TRM1 and TRM2. Interacts with portal protein.

The protein localises to the host nucleus. Functionally, component of the molecular motor that translocates viral genomic DNA in empty capsid during DNA packaging. Forms a tripartite terminase complex together with TRM1 and TRM2 in the host cytoplasm. Once the complex reaches the host nucleus, it interacts with the capsid portal vertex. This portal forms a ring in which genomic DNA is translocated into the capsid. TRM3 carries an RNase H-like nuclease activity that plays an important role for the cleavage of concatemeric viral DNA into unit length genomes. In Homo sapiens (Human), this protein is Tripartite terminase subunit 3.